A 611-amino-acid chain; its full sequence is Protein Spindly (611 aa).

Residues 1-288 are a coiled coil; sequence MEESETVLKL…QFQSLQKQHA (288 aa). Residues 499 to 511 are compositionally biased toward basic and acidic residues; sequence LKEDSSLSTKEQD. The interval 499–611 is disordered; sequence LKEDSSLSTK…PAATTQCPQQ (113 aa). Residues 549–567 show a composition bias toward polar residues; the sequence is RNTNNCSVTSTSPRSASEE. Basic and acidic residues predominate over residues 570–583; that stretch reads SESKRFDEEQEKRK.

The protein belongs to the Spindly family.

The protein localises to the chromosome. It is found in the centromere. The protein resides in the kinetochore. Required for the localization of dynein and dynactin to the mitotic kintochore. Dynein is believed to control the initial lateral interaction between the kinetochore and spindle microtubules and to facilitate the subsequent formation of end-on kinetochore-microtubule attachments mediated by the NDC80 complex. May act as an adapter protein linking the dynein motor complex to various cargos. In Xenopus tropicalis (Western clawed frog), this protein is Protein Spindly (spdl1).